A 96-amino-acid chain; its full sequence is Large ribosomal subunit protein uL23 (96 aa).

This sequence belongs to the universal ribosomal protein uL23 family. As to quaternary structure, part of the 50S ribosomal subunit. Contacts protein L29, and trigger factor when it is bound to the ribosome.

In terms of biological role, one of the early assembly proteins it binds 23S rRNA. One of the proteins that surrounds the polypeptide exit tunnel on the outside of the ribosome. Forms the main docking site for trigger factor binding to the ribosome. This chain is Large ribosomal subunit protein uL23, found in Bacillus mycoides (strain KBAB4) (Bacillus weihenstephanensis).